Here is a 123-residue protein sequence, read N- to C-terminus: UPF0738 protein BALH_1059 (123 aa).

It belongs to the UPF0738 family.

The polypeptide is UPF0738 protein BALH_1059 (Bacillus thuringiensis (strain Al Hakam)).